A 365-amino-acid chain; its full sequence is Heme A synthase (365 aa).

The next 8 helical transmembrane spans lie at 17 to 37 (AVRIWLTVVAALIAVMVLVGG), 107 to 127 (VIGIAYLLPFLWFLWRGAIGP), 132 to 152 (ALWGIFALGALQGAVGWWMVA), 164 to 184 (VRLAVHLTLALIIYAAIVWTL), 203 to 223 (AIALLALTLLQLFLGALVAGL), 264 to 283 (QFDHRMMAYALWALAAWHAI), 296 to 316 (GALWLFAALSLQAVLGILTVL), and 320 to 340 (PIGLALAHQAVGIVVLTLAVL). His267 contacts heme. His327 contacts heme.

It belongs to the COX15/CtaA family. Type 2 subfamily. As to quaternary structure, interacts with CtaB. It depends on heme b as a cofactor.

Its subcellular location is the cell membrane. It carries out the reaction Fe(II)-heme o + 2 A + H2O = Fe(II)-heme a + 2 AH2. It participates in porphyrin-containing compound metabolism; heme A biosynthesis; heme A from heme O: step 1/1. Functionally, catalyzes the conversion of heme O to heme A by two successive hydroxylations of the methyl group at C8. The first hydroxylation forms heme I, the second hydroxylation results in an unstable dihydroxymethyl group, which spontaneously dehydrates, resulting in the formyl group of heme A. This is Heme A synthase from Rhodopseudomonas palustris (strain HaA2).